The chain runs to 349 residues: Xylitol-binding protein (349 aa).

The signal sequence occupies residues 1 to 22 (MNITSKIGAIAAAGAVGLGLTA). A lipid anchor (N-palmitoyl cysteine) is attached at Cys23. A lipid anchor (S-diacylglycerol cysteine) is attached at Cys23. Xylitol contacts are provided by Tyr42, Asn121, Arg173, Asn224, Asp249, and Gln269.

It belongs to the bacterial solute-binding protein 2 family.

It is found in the cell membrane. Functionally, part of an ABC transporter complex likely involved in xylitol import. Binds xylitol. In Mycolicibacterium smegmatis (strain ATCC 700084 / mc(2)155) (Mycobacterium smegmatis), this protein is Xylitol-binding protein.